We begin with the raw amino-acid sequence, 228 residues long: 2-C-methyl-D-erythritol 4-phosphate cytidylyltransferase (228 aa).

Belongs to the IspD/TarI cytidylyltransferase family. IspD subfamily.

It catalyses the reaction 2-C-methyl-D-erythritol 4-phosphate + CTP + H(+) = 4-CDP-2-C-methyl-D-erythritol + diphosphate. The protein operates within isoprenoid biosynthesis; isopentenyl diphosphate biosynthesis via DXP pathway; isopentenyl diphosphate from 1-deoxy-D-xylulose 5-phosphate: step 2/6. Functionally, catalyzes the formation of 4-diphosphocytidyl-2-C-methyl-D-erythritol from CTP and 2-C-methyl-D-erythritol 4-phosphate (MEP). The chain is 2-C-methyl-D-erythritol 4-phosphate cytidylyltransferase from Crocosphaera subtropica (strain ATCC 51142 / BH68) (Cyanothece sp. (strain ATCC 51142)).